The following is a 349-amino-acid chain: Outer membrane protein assembly factor BamC (349 aa).

A signal peptide spans 1–24 (MAILLQKSKVMKIAGMSLAMLLAA). A lipid anchor (N-palmitoyl cysteine) is attached at Cys-25. Cys-25 carries the S-diacylglycerol cysteine lipid modification.

Belongs to the BamC family. As to quaternary structure, part of the Bam complex, which is composed of the outer membrane protein BamA, and four lipoproteins BamB, BamC, BamD and BamE.

It localises to the cell outer membrane. In terms of biological role, part of the outer membrane protein assembly complex, which is involved in assembly and insertion of beta-barrel proteins into the outer membrane. The polypeptide is Outer membrane protein assembly factor BamC (Photorhabdus asymbiotica subsp. asymbiotica (strain ATCC 43949 / 3105-77) (Xenorhabdus luminescens (strain 2))).